Consider the following 173-residue polypeptide: Adenine phosphoribosyltransferase (173 aa).

Belongs to the purine/pyrimidine phosphoribosyltransferase family. Homodimer.

Its subcellular location is the cytoplasm. It carries out the reaction AMP + diphosphate = 5-phospho-alpha-D-ribose 1-diphosphate + adenine. The protein operates within purine metabolism; AMP biosynthesis via salvage pathway; AMP from adenine: step 1/1. Its function is as follows. Catalyzes a salvage reaction resulting in the formation of AMP, that is energically less costly than de novo synthesis. The chain is Adenine phosphoribosyltransferase from Desulfosudis oleivorans (strain DSM 6200 / JCM 39069 / Hxd3) (Desulfococcus oleovorans).